The sequence spans 229 residues: Enolase-phosphatase E1 (229 aa).

Positions Asp208–Ser218 are enriched in polar residues. The interval Asp208–Thr229 is disordered. Over residues Asp220–Thr229 the composition is skewed to basic and acidic residues.

It belongs to the HAD-like hydrolase superfamily. MasA/MtnC family. Monomer. The cofactor is Mg(2+).

The enzyme catalyses 5-methylsulfanyl-2,3-dioxopentyl phosphate + H2O = 1,2-dihydroxy-5-(methylsulfanyl)pent-1-en-3-one + phosphate. Its pathway is amino-acid biosynthesis; L-methionine biosynthesis via salvage pathway; L-methionine from S-methyl-5-thio-alpha-D-ribose 1-phosphate: step 3/6. It functions in the pathway amino-acid biosynthesis; L-methionine biosynthesis via salvage pathway; L-methionine from S-methyl-5-thio-alpha-D-ribose 1-phosphate: step 4/6. Its function is as follows. Bifunctional enzyme that catalyzes the enolization of 2,3-diketo-5-methylthiopentyl-1-phosphate (DK-MTP-1-P) into the intermediate 2-hydroxy-3-keto-5-methylthiopentenyl-1-phosphate (HK-MTPenyl-1-P), which is then dephosphorylated to form the acireductone 1,2-dihydroxy-3-keto-5-methylthiopentene (DHK-MTPene). In Cronobacter sakazakii (strain ATCC BAA-894) (Enterobacter sakazakii), this protein is Enolase-phosphatase E1.